The sequence spans 449 residues: Myb-related protein Pp1 (449 aa).

An HTH myb-type domain is found at 1–30 (LGNRWSAIAIPRRTDNEIKNYWNTHLKKRL). A DNA-binding region (H-T-H motif) is located at residues 5–26 (WSAIAIPRRTDNEIKNYWNTHL).

Its subcellular location is the nucleus. Functionally, possible transcription activator. The sequence is that of Myb-related protein Pp1 (PP1) from Physcomitrium patens (Spreading-leaved earth moss).